The sequence spans 1834 residues: MKLSVNEAQLGFYLGSLSHLSACPGIDPRSSEDQPESLKTGQMMDESDEDFKELCASFFQRVKKHGIKEVSGERKTQKAASNGTQIRSKLKRTKQTATKTKTLQGPAEKKPPSGSQAPRTKKQRVTKWQASEPAHSVNGEGGVLASAPDPPVLRETAQNTQTGNQQEPSPNLSREKTRENVPNSDSQPPPSCLTTAVPSPSKPRTAQLVLQRMQQFKRADPERLRHASEECSLEAAREENVPKDPQEEMMAGNVYGLGPPAPESDAAVALTLQQEFARVGASAHDDSLEEKGLFFCQICQKNLSAMNVTRREQHVNRCLDEAEKTLRPSVPQIPECPICGKPFLTLKSRTSHLKQCAVKMEVGPQLLLQAVRLQTAQPEGSSSPPMFSFSDHSRGLKRRGPTSKKEPRKRRKVDEAPSEDLLVAMALSRSEMEPGAAVPALRLESAFSERIRPEAENKSRKKKPPVSPPLLLVQDSETTGRQIEDRVALLLSEEVELSSTPPLPASRILKEGWERAGQCPPPPERKQSFLWEGSALTGAWAMEDFYTARLVPPLVPQRPAQGLMQEPVPPLVPPEHSELSERRSPALHGTPTAGCGSRGPSPSASQREHQALQDLVDLAREGLSASPWPGSGGLAGSEGTAGLDVVPGGLPLTGFVVPSQDKHPDRGGRTLLSLGLLVADFGAMVNNPHLSDVQFQTDSGEVLYAHKFVLYARCPLLIQYVNNEGFSAVEDGVLTQRVLLGDVSTEAARTFLHYLYTADTGLPPGLSSELSSLAHRFGVSELVHLCEQVPIATDSEGKPWEEKEAENCESRAENFQELLRSMWADEEEEAETLLKSKDHEEDQENVNEAEMEEIYEFAATQRKLLQEERAAGAGEDADWLEGGSPVSGQLLAGVQVQKQWDKVEEMEPLEPGRDEAATTWEKMGQCALPPPQGQHSGARGAEAPEQEAPEEALGHSSCSSPSRDCQAERKEGSLPHSDDAGDYEQLFSSTQGEISEPSQITSEPEEQSGAVRERGLEVSHRLAPWQASPPHPCRFLLGPPQGGSPRGSHHTSGSSLSTPRSRGGTSQVGSPTLLSPAVPSKQKRDRSILTLSKEPGHQKGKERRSVLECRNKGVLMFPEKSPSIDLTQSNPDHSSSRSQKSSSKLNEEDEVILLLDSDEELELEQTKMKSISSDPLEEKKALEISPRSCELFSIIDVDADQEPSQSPPRSEAVLQQEDEGALPENRGSLGRRGAPWLFCDRESSPSEASTTDTSWLVPATPLASRSRDCSSQTQISSLRSGLAVQAVTQHTPRASVGNREGNEVAQKFSVIRPQTPPPQTPSSCLTPVSPGTSDGRRQGHRSPSRPHPGGHPHSSPLAPHPISGDRAHFSRRFLKHSPPGPSFLNQTPAGEVVEVGDSDDEQEVASHQANRSPPLDSDPPIPIDDCCWHMEPLSPIPIDHWNLERTGPLSTSSPSRRMNEAADSRDCRSPGLLDTTPIRGSCTTQRKLQEKSSGAGSLGNSRPSFLNSALWDVWDGEEQRPPETPPPAQMPSAGGAQKPEGLETPKGANRKKNLPPKVPITPMPQYSIMETPVLKKELDRFGVRPLPKRQMVLKLKEIFQYTHQTLDSDSEDESQSSQPLLQAPHCQTLASQTYKPSRAGVHAQQEATTGPGAHRPKGPAKTKGPRHQRKHHESITPPSRSPTKEAPPGLNDDAQIPASQESVATSVDGSDSSLSSQSSSSCEFGAAFESAGEEEGEGEVSASQAAVQAADTDEALRCYIRSKPALYQKVLLYQPFELRELQAELRQNGLRVSSRRLLDFLDTHCITFTTAATRREKLQGRRRQPRGKKKVERN.

Positions 1–669 (MKLSVNEAQL…QDKHPDRGGR (669 aa)) are interaction with SLX4IP, ERCC4/XPF and MSH2. The disordered stretch occupies residues 24–49 (PGIDPRSSEDQPESLKTGQMMDESDE). K68 is covalently cross-linked (Glycyl lysine isopeptide (Lys-Gly) (interchain with G-Cter in SUMO2)). Residues 69 to 206 (EVSGERKTQK…VPSPSKPRTA (138 aa)) form a disordered region. The segment covering 78–87 (KAASNGTQIR) has biased composition (polar residues). Residues 95–104 (QTATKTKTLQ) show a composition bias toward low complexity. Polar residues-rich tracts occupy residues 156–172 (TAQN…SPNL) and 180–204 (NVPN…SKPR). Phosphoserine is present on S169. A Phosphoserine modification is found at S287. K291 participates in a covalent cross-link: Glycyl lysine isopeptide (Lys-Gly) (interchain with G-Cter in SUMO2). UBZ4-type zinc fingers lie at residues 293 to 323 (LFFC…DEAE) and 333 to 361 (IPEC…VKME). The Zn(2+) site is built by C296, C299, H314, C318, C336, and C339. Residue K347 forms a Glycyl lysine isopeptide (Lys-Gly) (interchain with G-Cter in SUMO2) linkage. H352 and C356 together coordinate Zn(2+). K359 is covalently cross-linked (Glycyl lysine isopeptide (Lys-Gly) (interchain with G-Cter in SUMO2)). The span at 376-385 (AQPEGSSSPP) shows a compositional bias: polar residues. 3 disordered regions span residues 376 to 417 (AQPE…DEAP), 452 to 471 (RPEA…PPLL), and 561 to 610 (QGLM…REHQ). Over residues 395–411 (GLKRRGPTSKKEPRKRR) the composition is skewed to basic residues. Glycyl lysine isopeptide (Lys-Gly) (interchain with G-Cter in SUMO2) cross-links involve residues K412 and K458. Basic and acidic residues predominate over residues 575–584 (EHSELSERRS). The segment at 684 to 1834 (MVNNPHLSDV…PRGKKKVERN (1151 aa)) is interaction with PLK1 and TERF2-TERF2IP. In terms of domain architecture, BTB spans 691 to 764 (SDVQFQTDSG…LYTADTGLPP (74 aa)). Positions 801–870 (EEKEAENCES…QRKLLQEERA (70 aa)) form a coiled coil. Disordered stretches follow at residues 826–846 (EEEE…QENV) and 902–1151 (KVEE…EDEV). Glycyl lysine isopeptide (Lys-Gly) (interchain with G-Cter in SUMO2) cross-links involve residues K835, K902, and K970. 2 stretches are compositionally biased toward basic and acidic residues: residues 902 to 916 (KVEE…RDEA) and 965 to 979 (CQAE…HSDD). Polar residues predominate over residues 986 to 1002 (LFSSTQGEISEPSQITS). A compositionally biased stretch (basic and acidic residues) spans 1011–1020 (VRERGLEVSH). Residues S1028, S1044, and S1070 each carry the phosphoserine modification. Residues 1059 to 1073 (PRSRGGTSQVGSPTL) show a composition bias toward polar residues. Glycyl lysine isopeptide (Lys-Gly) (interchain with G-Cter in SUMO2) cross-links involve residues K1081 and K1093. Residues 1094–1111 (EPGHQKGKERRSVLECRN) show a composition bias toward basic and acidic residues. Glycyl lysine isopeptide (Lys-Gly) (interchain with G-Cter in SUMO2) cross-links involve residues K1112 and K1120. A Phosphoserine modification is found at S1121. Residues 1124 to 1133 (IDLTQSNPDH) are compositionally biased toward polar residues. Position 1135 is a phosphoserine (S1135). Glycyl lysine isopeptide (Lys-Gly) (interchain with G-Cter in SUMO2) cross-links involve residues K1169, K1179, and K1180. S1185 is modified (phosphoserine). Disordered stretches follow at residues 1195-1504 (IDVD…SRPS) and 1516-1564 (GEEQ…TPMP). Polar residues-rich tracts occupy residues 1245-1254 (PSEASTTDTS) and 1269-1279 (CSSQTQISSLR). The interval 1328–1648 (VSPGTSDGRR…AGVHAQQEAT (321 aa)) is interaction with MUS81. Residues 1338-1350 (QGHRSPSRPHPGG) show a composition bias toward basic residues. Low complexity predominate over residues 1351-1362 (HPHSSPLAPHPI). Acidic residues predominate over residues 1394–1403 (EVGDSDDEQE). Residues 1457-1468 (RMNEAADSRDCR) show a composition bias toward basic and acidic residues. A phosphoserine mark is found at S1464 and S1469. A compositionally biased stretch (polar residues) spans 1481-1504 (SCTTQRKLQEKSSGAGSLGNSRPS). Glycyl lysine isopeptide (Lys-Gly) (interchain with G-Cter in SUMO2) cross-links involve residues K1575 and K1576. Positions 1605–1746 (TLDSDSEDES…EGEVSASQAA (142 aa)) are disordered. Residue S1610 is modified to Phosphoserine. Residues 1632-1834 (QTYKPSRAGV…PRGKKKVERN (203 aa)) are interaction with SLX1. A compositionally biased stretch (basic residues) spans 1654–1672 (HRPKGPAKTKGPRHQRKHH). Residue K1657 forms a Glycyl lysine isopeptide (Lys-Gly) (interchain with G-Cter in SUMO2) linkage. Residues 1706 to 1730 (SVDGSDSSLSSQSSSSCEFGAAFES) show a composition bias toward low complexity.

This sequence belongs to the SLX4 family. As to quaternary structure, forms a heterodimer with SLX1A/GIYD1. Interacts with ERCC4/XPF; catalytic subunit of the ERCC4-ERCC1 endonuclease. Interacts with MUS81; catalytic subunit of the MUS81-EME1 endonuclease. Interacts with MSH2; component of the MSH2-MSH3 mismatch repair complex. Interacts with TERF2-TERF2IP. Interacts with PLK1 and SLX4IP.

Its subcellular location is the nucleus. Regulatory subunit that interacts with and increases the activity of different structure-specific endonucleases. Has several distinct roles in protecting genome stability by resolving diverse forms of deleterious DNA structures originating from replication and recombination intermediates and from DNA damage. Component of the SLX1-SLX4 structure-specific endonuclease that resolves DNA secondary structures generated during DNA repair and recombination. Has endonuclease activity towards branched DNA substrates, introducing single-strand cuts in duplex DNA close to junctions with ss-DNA. Has a preference for 5'-flap structures, and promotes symmetrical cleavage of static and migrating Holliday junctions (HJs). Resolves HJs by generating two pairs of ligatable, nicked duplex products. Interacts with the structure-specific ERCC4-ERCC1 endonuclease and promotes the cleavage of bubble structures. Interacts with the structure-specific MUS81-EME1 endonuclease and promotes the cleavage of 3'-flap and replication fork-like structures. SLX4 is required for recovery from alkylation-induced DNA damage and is involved in the resolution of DNA double-strand breaks. The protein is Structure-specific endonuclease subunit SLX4 (SLX4) of Homo sapiens (Human).